The chain runs to 335 residues: MNDFKKVSESLETALRNEFDFRFATEVSLKEISRWRIGGPAAVFAEPSSINEICALLAFMKNRPEPVVVVGGTSNILFDSDGFGGLVIKLGENFSNFIIEGSRIRAQAGASVPQLVRAVATEGLEGIVHAGGIPGTVGGLVVMNGGTQRRGIGEHVTKVLVTDAEGSIRELNANELQFTYRNSVLKNSETTVLEVELLLKPGNAGELLAELETILDQRSQKFPEDLPNCGSTFLSDPAMYSIVGPPGKAIEDAGLKGLRRGSAEISMQHANFIVNHGDASDDDILWLISAVRKEVYSRTGFVMDCEVLYLSYSGDFRPAHEVADEQWPDIDLVRN.

The region spanning 36-202 (RIGGPAAVFA…LEVELLLKPG (167 aa)) is the FAD-binding PCMH-type domain. R181 is a catalytic residue. The Proton donor role is filled by S231. Residue E306 is part of the active site.

The protein belongs to the MurB family. The cofactor is FAD.

It is found in the cytoplasm. It carries out the reaction UDP-N-acetyl-alpha-D-muramate + NADP(+) = UDP-N-acetyl-3-O-(1-carboxyvinyl)-alpha-D-glucosamine + NADPH + H(+). Its pathway is cell wall biogenesis; peptidoglycan biosynthesis. Its function is as follows. Cell wall formation. The chain is UDP-N-acetylenolpyruvoylglucosamine reductase 1 (murB1) from Corynebacterium glutamicum (strain ATCC 13032 / DSM 20300 / JCM 1318 / BCRC 11384 / CCUG 27702 / LMG 3730 / NBRC 12168 / NCIMB 10025 / NRRL B-2784 / 534).